Reading from the N-terminus, the 535-residue chain is CTP synthase (535 aa).

An amidoligase domain region spans residues 1 to 267 (MTKFIFVTGG…DDIVIQRLQL (267 aa)). Serine 13 contributes to the CTP binding site. Serine 13 contributes to the UTP binding site. Residue 14–19 (SLGKGI) participates in ATP binding. Tyrosine 54 contributes to the L-glutamine binding site. Aspartate 71 contacts ATP. Aspartate 71 and glutamate 141 together coordinate Mg(2+). CTP contacts are provided by residues 148–150 (DIE), 188–193 (KTKPTQ), and lysine 224. Residues 188 to 193 (KTKPTQ) and lysine 224 each bind UTP. Residue 240-242 (RDA) coordinates ATP. Positions 293–535 (TIGLVGKYVS…VEAALNYQQK (243 aa)) constitute a Glutamine amidotransferase type-1 domain. Residue glycine 355 coordinates L-glutamine. Catalysis depends on cysteine 382, which acts as the Nucleophile; for glutamine hydrolysis. L-glutamine is bound by residues 383-386 (LGMQ), glutamate 406, and arginine 463. Active-site residues include histidine 508 and glutamate 510.

The protein belongs to the CTP synthase family. As to quaternary structure, homotetramer.

It carries out the reaction UTP + L-glutamine + ATP + H2O = CTP + L-glutamate + ADP + phosphate + 2 H(+). It catalyses the reaction L-glutamine + H2O = L-glutamate + NH4(+). The enzyme catalyses UTP + NH4(+) + ATP = CTP + ADP + phosphate + 2 H(+). The protein operates within pyrimidine metabolism; CTP biosynthesis via de novo pathway; CTP from UDP: step 2/2. Its activity is regulated as follows. Allosterically activated by GTP, when glutamine is the substrate; GTP has no effect on the reaction when ammonia is the substrate. The allosteric effector GTP functions by stabilizing the protein conformation that binds the tetrahedral intermediate(s) formed during glutamine hydrolysis. Inhibited by the product CTP, via allosteric rather than competitive inhibition. Catalyzes the ATP-dependent amination of UTP to CTP with either L-glutamine or ammonia as the source of nitrogen. Regulates intracellular CTP levels through interactions with the four ribonucleotide triphosphates. The chain is CTP synthase from Staphylococcus epidermidis (strain ATCC 35984 / DSM 28319 / BCRC 17069 / CCUG 31568 / BM 3577 / RP62A).